A 94-amino-acid polypeptide reads, in one-letter code: uncharacterized protein (94 aa).

Could be a silencing control element for the regulation of the restriction system. This is an uncharacterized protein from Herpetosiphon aurantiacus (Herpetosiphon giganteus).